The sequence spans 470 residues: Uronate isomerase (470 aa).

This sequence belongs to the metallo-dependent hydrolases superfamily. Uronate isomerase family.

The enzyme catalyses D-glucuronate = D-fructuronate. It catalyses the reaction aldehydo-D-galacturonate = keto-D-tagaturonate. The protein operates within carbohydrate metabolism; pentose and glucuronate interconversion. The sequence is that of Uronate isomerase from Salmonella arizonae (strain ATCC BAA-731 / CDC346-86 / RSK2980).